We begin with the raw amino-acid sequence, 119 residues long: Large ribosomal subunit protein uL18 (119 aa).

The protein belongs to the universal ribosomal protein uL18 family. In terms of assembly, part of the 50S ribosomal subunit; part of the 5S rRNA/L5/L18/L25 subcomplex. Contacts the 5S and 23S rRNAs.

This is one of the proteins that bind and probably mediate the attachment of the 5S RNA into the large ribosomal subunit, where it forms part of the central protuberance. The protein is Large ribosomal subunit protein uL18 of Desulfovibrio desulfuricans (strain ATCC 27774 / DSM 6949 / MB).